The sequence spans 233 residues: Peptidyl-tRNA hydrolase (233 aa).

TRNA is bound at residue Tyr14. His19 (proton acceptor) is an active-site residue. Residues Phe64, Asn66, and Asn112 each contribute to the tRNA site. Positions 187-233 (VSPRRSGTGQKGKDKPPAPAKQQATATKAEPEPDTRSALQKLMERFK) are disordered.

It belongs to the PTH family. In terms of assembly, monomer.

The protein resides in the cytoplasm. The enzyme catalyses an N-acyl-L-alpha-aminoacyl-tRNA + H2O = an N-acyl-L-amino acid + a tRNA + H(+). In terms of biological role, hydrolyzes ribosome-free peptidyl-tRNAs (with 1 or more amino acids incorporated), which drop off the ribosome during protein synthesis, or as a result of ribosome stalling. Its function is as follows. Catalyzes the release of premature peptidyl moieties from peptidyl-tRNA molecules trapped in stalled 50S ribosomal subunits, and thus maintains levels of free tRNAs and 50S ribosomes. The polypeptide is Peptidyl-tRNA hydrolase (Roseobacter denitrificans (strain ATCC 33942 / OCh 114) (Erythrobacter sp. (strain OCh 114))).